A 130-amino-acid polypeptide reads, in one-letter code: MAQVQYAGTGRRKNSVARVRLVPGTGKITMNGKDVRDYLPYENLITDLSQPFGITETTGSYDVLVNVNGGGFSGQAGATRHGIARALLTVDPDFRGPLKKAGMLTRDPRMKERKKYGLKKARKASQFSKR.

The tract at residues 98 to 130 (LKKAGMLTRDPRMKERKKYGLKKARKASQFSKR) is disordered. The span at 111–130 (KERKKYGLKKARKASQFSKR) shows a compositional bias: basic residues.

Belongs to the universal ribosomal protein uS9 family.

This Lacticaseibacillus casei (strain BL23) (Lactobacillus casei) protein is Small ribosomal subunit protein uS9.